The chain runs to 231 residues: 2-C-methyl-D-erythritol 4-phosphate cytidylyltransferase (231 aa).

The protein belongs to the IspD/TarI cytidylyltransferase family. IspD subfamily. Homodimer.

The catalysed reaction is 2-C-methyl-D-erythritol 4-phosphate + CTP + H(+) = 4-CDP-2-C-methyl-D-erythritol + diphosphate. It participates in isoprenoid biosynthesis; isopentenyl diphosphate biosynthesis via DXP pathway; isopentenyl diphosphate from 1-deoxy-D-xylulose 5-phosphate: step 2/6. Catalyzes the formation of 4-diphosphocytidyl-2-C-methyl-D-erythritol from CTP and 2-C-methyl-D-erythritol 4-phosphate (MEP). The protein is 2-C-methyl-D-erythritol 4-phosphate cytidylyltransferase of Citrobacter koseri (strain ATCC BAA-895 / CDC 4225-83 / SGSC4696).